A 420-amino-acid polypeptide reads, in one-letter code: S-adenosylmethionine synthase (420 aa).

His-16 serves as a coordination point for ATP. Asp-18 lines the Mg(2+) pocket. Glu-44 contributes to the K(+) binding site. 2 residues coordinate L-methionine: Glu-57 and Gln-100. A flexible loop region spans residues Gln-100–Lys-110. ATP contacts are provided by residues Asp-175 to Lys-177, Lys-251 to Phe-252, Asp-260, Arg-266 to Lys-267, Ala-283, and Lys-287. Residue Asp-260 participates in L-methionine binding. Position 291 (Lys-291) interacts with L-methionine.

It belongs to the AdoMet synthase family. In terms of assembly, homotetramer; dimer of dimers. Mg(2+) serves as cofactor. Requires K(+) as cofactor.

It localises to the cytoplasm. It carries out the reaction L-methionine + ATP + H2O = S-adenosyl-L-methionine + phosphate + diphosphate. Its pathway is amino-acid biosynthesis; S-adenosyl-L-methionine biosynthesis; S-adenosyl-L-methionine from L-methionine: step 1/1. Functionally, catalyzes the formation of S-adenosylmethionine (AdoMet) from methionine and ATP. The overall synthetic reaction is composed of two sequential steps, AdoMet formation and the subsequent tripolyphosphate hydrolysis which occurs prior to release of AdoMet from the enzyme. The sequence is that of S-adenosylmethionine synthase from Trichodesmium erythraeum (strain IMS101).